Here is a 241-residue protein sequence, read N- to C-terminus: MQRGDGRNFNQLRPITITPGFQSFAEGSVLIEQGKTRVICSVSMEDRVPQFLRNSGTGWVTAEYSMLPRSTVTRTQRDSSAGKISGRSQEIQRLIGRSLRSCVDMAALGERSFIVDCDVIQADAGTRTASITGSYIALYLAFKKMVDMGILSKMPFTSQVAAVSVSIFKGNIVLDPCYDEDFQAEVDFNLVMNDRGEFVEIQGTAEGKAFSRDTLDQVLKLGEAGIRQLFDIQKGITQPQL.

Phosphate-binding positions include R87 and 125–127 (GTR).

The protein belongs to the RNase PH family. As to quaternary structure, homohexameric ring arranged as a trimer of dimers.

It catalyses the reaction tRNA(n+1) + phosphate = tRNA(n) + a ribonucleoside 5'-diphosphate. In terms of biological role, phosphorolytic 3'-5' exoribonuclease that plays an important role in tRNA 3'-end maturation. Removes nucleotide residues following the 3'-CCA terminus of tRNAs; can also add nucleotides to the ends of RNA molecules by using nucleoside diphosphates as substrates, but this may not be physiologically important. Probably plays a role in initiation of 16S rRNA degradation (leading to ribosome degradation) during starvation. The protein is Ribonuclease PH of Dehalococcoides mccartyi (strain ATCC BAA-2100 / JCM 16839 / KCTC 5957 / BAV1).